A 163-amino-acid chain; its full sequence is NADH-quinone oxidoreductase subunit I (163 aa).

2 consecutive 4Fe-4S ferredoxin-type domains span residues 53–83 (LRRY…IEAG) and 94–123 (VRYD…EGPN). [4Fe-4S] cluster is bound by residues Cys63, Cys66, Cys69, Cys73, Cys103, Cys106, Cys109, and Cys113.

This sequence belongs to the complex I 23 kDa subunit family. In terms of assembly, NDH-1 is composed of 14 different subunits. Subunits NuoA, H, J, K, L, M, N constitute the membrane sector of the complex. Requires [4Fe-4S] cluster as cofactor.

The protein resides in the cell inner membrane. It catalyses the reaction a quinone + NADH + 5 H(+)(in) = a quinol + NAD(+) + 4 H(+)(out). In terms of biological role, NDH-1 shuttles electrons from NADH, via FMN and iron-sulfur (Fe-S) centers, to quinones in the respiratory chain. The immediate electron acceptor for the enzyme in this species is believed to be ubiquinone. Couples the redox reaction to proton translocation (for every two electrons transferred, four hydrogen ions are translocated across the cytoplasmic membrane), and thus conserves the redox energy in a proton gradient. The sequence is that of NADH-quinone oxidoreductase subunit I from Brucella abortus (strain S19).